The following is a 786-amino-acid chain: Mitochondrial intermediate peptidase (786 aa).

Residues 1 to 29 (MSSILLRSYRHHAKVWTRPSSKSSFIRSL) constitute a mitochondrion transit peptide. His-567 provides a ligand contact to Zn(2+). Residue Glu-568 is part of the active site. His-571 and His-574 together coordinate Zn(2+).

The protein belongs to the peptidase M3 family. Requires Zn(2+) as cofactor.

It localises to the mitochondrion matrix. The enzyme catalyses Release of an N-terminal octapeptide as second stage of processing of some proteins imported into the mitochondrion.. Functionally, cleaves proteins, imported into the mitochondrion, to their mature size. While most mitochondrial precursor proteins are processed to the mature form in one step by mitochondrial processing peptidase (MPP), the sequential cleavage by MIP of an octapeptide after initial processing by MPP is a required step for a subgroup of nuclear-encoded precursor proteins destined for the matrix or the inner membrane. This is Mitochondrial intermediate peptidase (OCT1) from Meyerozyma guilliermondii (strain ATCC 6260 / CBS 566 / DSM 6381 / JCM 1539 / NBRC 10279 / NRRL Y-324) (Yeast).